The chain runs to 309 residues: MNTLDETLLKEIISSNKKYTNYGQVASYIPELKNARRNDLGICIIDSENNLYSAGNCSTKFTIQSISKPIVLAMALMDNDWEDVFSNVGMEPSGDPFNSIMKLEINDTKKPCNPMINAGAIVTTSLINGSCLEEKEERMLSFFRKLAKNDNIGINYDVYKSEKMTGDRNRAMAYLLKSDGFIRGNVEDVLDLYFKQCSIEIDSVDLARIGINLANYGVDIENGEHLMSEMVSRIVKTFMMTCGMYDASGEFAIKVGIPAKSGVGGGIMASVPGRMGIGVYGPALDKKGNSVAGVKVLEELSNKLKLNIF.

Residues S65, N117, E162, N169, Y193, Y245, and V263 each coordinate substrate.

The protein belongs to the glutaminase family. Homotetramer.

It carries out the reaction L-glutamine + H2O = L-glutamate + NH4(+). The polypeptide is Glutaminase (Clostridioides difficile (strain 630) (Peptoclostridium difficile)).